The primary structure comprises 705 residues: p-hydroxybenzoic acid--AMP ligase FadD22 (705 aa).

The region spanning 541–619 is the Carrier domain; the sequence is ERQRLVVDAV…GLAQYLEAEL (79 aa). Ser-579 is subject to O-(pantetheine 4'-phosphoryl)serine.

This sequence belongs to the ATP-dependent AMP-binding enzyme family.

The enzyme catalyses holo-[4-hydroxyphenylalkanoate synthase] + 4-hydroxybenzoate + ATP = 4-hydroxyphenyl-[4-hydroxyphenylalkanoate synthase] + AMP + diphosphate. The protein operates within lipid metabolism; fatty acid biosynthesis. In terms of biological role, catalyzes the adenylation of p-hydroxybenzoic acid (pHBA) to form p-hydroxybenzoic acid-AMP (pHBA-AMP), which is converted directly to p-hydroxybenzoyl-S-FadD22 (pHBA-S-FAdD22) thioester intermediate in a CoA-independent manner by attack of the phosphopantetheine thiol of FadD22. Usually, this intermediate primes the biosynthesis of the phenolphthiocerol (PPOL) by presenting the pHBA starter unit for elongation by Pks15/1, but M.tuberculosis lacks Pks15/1 due to a natural frameshift and thus is unable to produce PPOL. In Mycobacterium tuberculosis (strain CDC 1551 / Oshkosh), this protein is p-hydroxybenzoic acid--AMP ligase FadD22 (fadD22).